The following is a 104-amino-acid chain: ATP-dependent Clp protease adapter protein ClpS (104 aa).

This sequence belongs to the ClpS family. In terms of assembly, binds to the N-terminal domain of the chaperone ClpA.

In terms of biological role, involved in the modulation of the specificity of the ClpAP-mediated ATP-dependent protein degradation. This chain is ATP-dependent Clp protease adapter protein ClpS, found in Paraburkholderia phymatum (strain DSM 17167 / CIP 108236 / LMG 21445 / STM815) (Burkholderia phymatum).